A 218-amino-acid chain; its full sequence is Phosphatidylserine decarboxylase proenzyme (218 aa).

Catalysis depends on Ser-187, which acts as the Schiff-base intermediate with substrate; via pyruvic acid. Ser-187 carries the post-translational modification Pyruvic acid (Ser); by autocatalysis.

Belongs to the phosphatidylserine decarboxylase family. PSD-A subfamily. In terms of assembly, heterodimer of a large membrane-associated beta subunit and a small pyruvoyl-containing alpha subunit. The cofactor is pyruvate. In terms of processing, is synthesized initially as an inactive proenzyme. Formation of the active enzyme involves a self-maturation process in which the active site pyruvoyl group is generated from an internal serine residue via an autocatalytic post-translational modification. Two non-identical subunits are generated from the proenzyme in this reaction, and the pyruvate is formed at the N-terminus of the alpha chain, which is derived from the carboxyl end of the proenzyme. The post-translation cleavage follows an unusual pathway, termed non-hydrolytic serinolysis, in which the side chain hydroxyl group of the serine supplies its oxygen atom to form the C-terminus of the beta chain, while the remainder of the serine residue undergoes an oxidative deamination to produce ammonia and the pyruvoyl prosthetic group on the alpha chain.

The protein localises to the cell membrane. The catalysed reaction is a 1,2-diacyl-sn-glycero-3-phospho-L-serine + H(+) = a 1,2-diacyl-sn-glycero-3-phosphoethanolamine + CO2. The protein operates within phospholipid metabolism; phosphatidylethanolamine biosynthesis; phosphatidylethanolamine from CDP-diacylglycerol: step 2/2. In terms of biological role, catalyzes the formation of phosphatidylethanolamine (PtdEtn) from phosphatidylserine (PtdSer). This chain is Phosphatidylserine decarboxylase proenzyme, found in Geobacter metallireducens (strain ATCC 53774 / DSM 7210 / GS-15).